Reading from the N-terminus, the 449-residue chain is Putative methylthiotransferase MJ0865 (449 aa).

The Radical SAM core domain maps to 163-390 (SIRGANVYIE…EGEYRKLGLS (228 aa)). [4Fe-4S] cluster contacts are provided by Cys-177, Cys-181, and Cys-184.

It belongs to the methylthiotransferase family. It depends on [4Fe-4S] cluster as a cofactor.

This Methanocaldococcus jannaschii (strain ATCC 43067 / DSM 2661 / JAL-1 / JCM 10045 / NBRC 100440) (Methanococcus jannaschii) protein is Putative methylthiotransferase MJ0865.